The primary structure comprises 80 residues: MAFLKKSLFLVLFLGIVSLSICEEEKREGEEEEKQEEENEELSEEELRERRALLDKLKSLGKVVGKVAIGVAQHYLNPQQ.

An N-terminal signal peptide occupies residues 1 to 22 (MAFLKKSLFLVLFLGIVSLSIC). Residues 23 to 49 (EEEKREGEEEEKQEEENEELSEEELRE) constitute a propeptide that is removed on maturation. Residues 27-46 (REGEEEEKQEEENEELSEEE) form a disordered region. Over residues 30–44 (EEEEKQEEENEELSE) the composition is skewed to acidic residues.

Belongs to the frog skin active peptide (FSAP) family. Dermaseptin subfamily. Expressed by the skin glands.

It localises to the secreted. Its function is as follows. Has antibacterial activity. The chain is Raniseptin-8 from Boana raniceps (Chaco tree frog).